A 399-amino-acid polypeptide reads, in one-letter code: Acetylornithine aminotransferase (399 aa).

Pyridoxal 5'-phosphate-binding positions include 102–103 and Phe138; that span reads GA. Arg141 serves as a coordination point for N(2)-acetyl-L-ornithine. 223-226 contributes to the pyridoxal 5'-phosphate binding site; sequence DEVQ. Residue Lys252 is modified to N6-(pyridoxal phosphate)lysine. Thr280 is a binding site for pyridoxal 5'-phosphate.

This sequence belongs to the class-III pyridoxal-phosphate-dependent aminotransferase family. ArgD subfamily. Homodimer. Pyridoxal 5'-phosphate serves as cofactor.

The protein localises to the cytoplasm. It catalyses the reaction N(2)-acetyl-L-ornithine + 2-oxoglutarate = N-acetyl-L-glutamate 5-semialdehyde + L-glutamate. Its pathway is amino-acid biosynthesis; L-arginine biosynthesis; N(2)-acetyl-L-ornithine from L-glutamate: step 4/4. The chain is Acetylornithine aminotransferase from Ralstonia nicotianae (strain ATCC BAA-1114 / GMI1000) (Ralstonia solanacearum).